Consider the following 284-residue polypeptide: Riboflavin transporter (284 aa).

2 consecutive EamA domains span residues 2–129 (VAAC…LIII) and 141–273 (LLPI…SLYL). The next 8 membrane-spanning stretches (helical) occupy residues 26–46 (SVII…PLLV), 58–78 (FGLH…WIYA), 82–102 (VPIW…ILCA), 115–135 (LLTT…WSDS), 136–156 (YTVY…YSVM), 167–187 (ASIS…LWLA), 195–215 (ITAP…FTAL), and 247–267 (GWIV…ALII).

This sequence belongs to the drug/metabolite transporter (DMT) superfamily. 10 TMS drug/metabolite exporter (DME) (TC 2.A.7.3) family.

The protein resides in the cell membrane. Functionally, transports riboflavin into the cell. The polypeptide is Riboflavin transporter (Brucella anthropi (strain ATCC 49188 / DSM 6882 / CCUG 24695 / JCM 21032 / LMG 3331 / NBRC 15819 / NCTC 12168 / Alc 37) (Ochrobactrum anthropi)).